An 875-amino-acid chain; its full sequence is Alanine--tRNA ligase (875 aa).

His-564, His-568, Cys-666, and His-670 together coordinate Zn(2+).

Belongs to the class-II aminoacyl-tRNA synthetase family. As to quaternary structure, homotetramer. The cofactor is Zn(2+).

Its subcellular location is the cytoplasm. The enzyme catalyses tRNA(Ala) + L-alanine + ATP = L-alanyl-tRNA(Ala) + AMP + diphosphate. Its function is as follows. Catalyzes the attachment of alanine to tRNA(Ala) in a two-step reaction: alanine is first activated by ATP to form Ala-AMP and then transferred to the acceptor end of tRNA(Ala). Also edits incorrectly charged Ser-tRNA(Ala) and Gly-tRNA(Ala) via its editing domain. The chain is Alanine--tRNA ligase from Pectobacterium atrosepticum (strain SCRI 1043 / ATCC BAA-672) (Erwinia carotovora subsp. atroseptica).